Consider the following 68-residue polypeptide: MAGQLKSKIVAVAVAAVVVVASSLVGTASAADAPAPAPTSGATATAAAAPAFAAVSVAAAALGGYLFC.

The signal sequence occupies residues 1 to 30; the sequence is MAGQLKSKIVAVAVAAVVVVASSLVGTASA. Residue Ser-40 is the site of GPI-anchor amidated serine attachment. Residues 41–68 constitute a propeptide, removed in mature form; the sequence is GATATAAAAPAFAAVSVAAAALGGYLFC.

It belongs to the AG-peptide AGP family. Post-translationally, O-glycosylated on hydroxyprolines; noncontiguous hydroxylproline residues are glycosylated with arabinogalactan. In terms of tissue distribution, expressed in roots, stems, flowers and seeds.

It localises to the vacuole. It is found in the aleurone grain membrane. In terms of biological role, proteoglycan that seems to be implicated in diverse developmental roles such as differentiation, cell-cell recognition, embryogenesis and programmed cell death. In Oryza sativa subsp. japonica (Rice), this protein is Arabinogalactan peptide 1 (AGPEP1).